Consider the following 797-residue polypeptide: LPS-assembly protein LptD (797 aa).

The signal sequence occupies residues 1-20 (MHTIRCLILSALSVAGAAQA). Residues 23 to 45 (SQDAAPAGRQPVGSVASPGLEMP) form a disordered region.

It belongs to the LptD family. Component of the lipopolysaccharide transport and assembly complex. Interacts with LptE and LptA.

It is found in the cell outer membrane. Its function is as follows. Together with LptE, is involved in the assembly of lipopolysaccharide (LPS) at the surface of the outer membrane. In Bordetella avium (strain 197N), this protein is LPS-assembly protein LptD.